We begin with the raw amino-acid sequence, 184 residues long: Casparian strip membrane protein 3 (184 aa).

Topologically, residues 1–24 are cytoplasmic; that stretch reads MEGSEEHGETSKAPLSRGVSKGVS. Residues 25–45 traverse the membrane as a helical segment; it reads ILDVILRFVAIIGTLASAIAM. The Extracellular portion of the chain corresponds to 46-72; sequence GTTNQTLPFFTQFIRFKAQYSDLPTLT. The N-linked (GlcNAc...) asparagine glycan is linked to asparagine 49. The helical transmembrane segment at 73–93 threads the bilayer; it reads FFVVANSIVSAYLILSLPLSI. The Cytoplasmic portion of the chain corresponds to 94 to 105; it reads VHVIRSRAKYSR. Residues 106 to 126 traverse the membrane as a helical segment; the sequence is LILIFFDAAMLALVTAGASAA. Residues 127–159 are Extracellular-facing; it reads AAIVYLAHKGNARANWLAICQQFDSFCERISGS. The helical transmembrane segment at 160-180 threads the bilayer; sequence LIGSFAAMVVLVLLIFLSAIA. The Cytoplasmic portion of the chain corresponds to 181–184; it reads LARR.

It belongs to the Casparian strip membrane proteins (CASP) family. As to quaternary structure, homodimer and heterodimers.

Its subcellular location is the cell membrane. In terms of biological role, regulates membrane-cell wall junctions and localized cell wall deposition. Required for establishment of the Casparian strip membrane domain (CSD) and the subsequent formation of Casparian strips, a cell wall modification of the root endodermis that determines an apoplastic barrier between the intraorganismal apoplasm and the extraorganismal apoplasm and prevents lateral diffusion. In Oryza sativa subsp. indica (Rice), this protein is Casparian strip membrane protein 3.